The primary structure comprises 231 residues: Urease subunit gamma/beta (231 aa).

Residues 1-101 are urease gamma; the sequence is MLLTPTELER…LVTVHQPIRP (101 aa). The tract at residues 102–231 is urease beta; the sequence is GQLPLAVMPT…RARAQFFKGA (130 aa).

This sequence in the N-terminal section; belongs to the urease gamma subunit family. In the C-terminal section; belongs to the urease beta subunit family. In terms of assembly, heterohexamer of 3 UreC (alpha) and 3 UreAB (gamma/beta) subunits.

It localises to the cytoplasm. It carries out the reaction urea + 2 H2O + H(+) = hydrogencarbonate + 2 NH4(+). It functions in the pathway nitrogen metabolism; urea degradation; CO(2) and NH(3) from urea (urease route): step 1/1. The sequence is that of Urease subunit gamma/beta from Pseudomonas syringae pv. syringae (strain B728a).